Reading from the N-terminus, the 39-residue chain is Photosystem II reaction center protein Psb30 (39 aa).

Residues 12-32 form a helical membrane-spanning segment; sequence IFQLTFVGLIVIAGPIVIAVL.

The protein belongs to the Psb30/Ycf12 family. PSII is composed of 1 copy each of membrane proteins PsbA, PsbB, PsbC, PsbD, PsbE, PsbF, PsbH, PsbI, PsbJ, PsbK, PsbL, PsbM, PsbT, PsbX, PsbY, PsbZ, Psb30/Ycf12, peripheral proteins PsbO, CyanoQ (PsbQ), PsbU, PsbV and a large number of cofactors. It forms dimeric complexes.

Its subcellular location is the cellular thylakoid membrane. A core subunit of photosystem II (PSII), probably helps stabilize the reaction center. The protein is Photosystem II reaction center protein Psb30 of Crocosphaera subtropica (strain ATCC 51142 / BH68) (Cyanothece sp. (strain ATCC 51142)).